The following is a 104-amino-acid chain: N(4)-acetylcytidine amidohydrolase (104 aa).

The ASCH domain occupies 7 to 104 (TFFTRFEQDI…FWVIAFELVD (98 aa)). The active-site Proton acceptor is the Lys21. The Nucleophile role is filled by Thr24. The Proton donor role is filled by Glu74.

This sequence belongs to the N(4)-acetylcytidine amidohydrolase family.

It carries out the reaction N(4)-acetylcytidine + H2O = cytidine + acetate + H(+). It catalyses the reaction N(4)-acetyl-2'-deoxycytidine + H2O = 2'-deoxycytidine + acetate + H(+). The enzyme catalyses N(4)-acetylcytosine + H2O = cytosine + acetate + H(+). In terms of biological role, catalyzes the hydrolysis of N(4)-acetylcytidine (ac4C). In Pasteurella multocida (strain Pm70), this protein is N(4)-acetylcytidine amidohydrolase.